We begin with the raw amino-acid sequence, 320 residues long: Cytochrome f (320 aa).

The first 35 residues, methionine 1–alanine 35, serve as a signal peptide directing secretion. Heme-binding residues include tyrosine 36, cysteine 56, cysteine 59, and histidine 60. Residues isoleucine 286–lysine 306 form a helical membrane-spanning segment.

This sequence belongs to the cytochrome f family. The 4 large subunits of the cytochrome b6-f complex are cytochrome b6, subunit IV (17 kDa polypeptide, petD), cytochrome f and the Rieske protein, while the 4 small subunits are PetG, PetL, PetM and PetN. The complex functions as a dimer. The cofactor is heme.

It is found in the plastid. Its subcellular location is the chloroplast thylakoid membrane. Component of the cytochrome b6-f complex, which mediates electron transfer between photosystem II (PSII) and photosystem I (PSI), cyclic electron flow around PSI, and state transitions. The sequence is that of Cytochrome f from Amborella trichopoda.